The following is a 477-amino-acid chain: Regulator of G-protein signaling 7 (477 aa).

One can recognise a DEP domain in the interval 37–112; that stretch reads EKNGIPIRTV…DDGTFYRFQT (76 aa). 2 positions are modified to phosphoserine: Ser-229 and Ser-241. Residues 236–257 form a disordered region; the sequence is DIRSHSPTHTPTPETKPPTEDE. Thr-243 is subject to Phosphothreonine. Positions 255–316 constitute a G protein gamma domain; the sequence is EDELHRQIKY…LSDDTTFWEL (62 aa). An RGS domain is found at 333-448; that stretch reads GMDEALKDPV…IRSSAYQELL (116 aa). Position 434 is a phosphoserine (Ser-434).

As to quaternary structure, interacts with GNB5, forming the RGS7-GNB5 complex. Interacts with GPR158; promotes the GTPase activator activity of the RGS7-GNB5 complex in absence of glycine, in contrast GTPase activator activity of the RGS7-GNB5 complex is inhibited in presence of glycine. Interacts with GPR179. Interacts with PKD1; this prevents rapid proteasomal degradation. Interacts with RGS7BP, leading to regulate the subcellular location of the heterodimer formed with GNB5. Interacts (phosphorylated form) with 14-3-3 protein YWHAQ. Interacts with SNAPIN. Interacts with GNAI1. Interacts with GNAO1, GNAI3 and GNAZ. Palmitoylated. Post-translationally, ubiquitinated, leading to rapid proteasomal degradation. In terms of processing, phosphorylation and subsequent interaction with 14-3-3 proteins inhibits GAP activity. Brain-specific. Predominantly cerebellar granule cells.

Its subcellular location is the cytoplasm. The protein resides in the cytosol. It is found in the cell membrane. It localises to the membrane. Functionally, GTPase activator component of the RGS7-GNB5 complex that regulates G protein-coupled receptor signaling cascades. The RGS7-GNB5 complex acts as an inhibitor signal transduction by promoting the GTPase activity of G protein alpha subunits, such as GNAO1, thereby driving them into their inactive GDP-bound form. May play a role in synaptic vesicle exocytosis. Glycine-dependent regulation of the RGS7-GNB5 complex by GPR158 affects mood and cognition via its ability to regulate neuronal excitability in L2/L3 pyramidal neurons of the prefrontal cortex. Modulates the activity of potassium channels that are activated by GNAO1 in response to muscarinic acetylcholine receptor M2/CHRM2 signaling. In Rattus norvegicus (Rat), this protein is Regulator of G-protein signaling 7 (Rgs7).